Reading from the N-terminus, the 111-residue chain is X antigen family member 3 (111 aa).

Positions 1-111 (MIWRGRSTYR…PEGGDRQPQV (111 aa)) are disordered. Positions 29–40 (PGDEEPQQEEPP) are enriched in acidic residues. Residues 97–111 (EQFKMPEGGDRQPQV) are compositionally biased toward basic and acidic residues.

Belongs to the GAGE family.

This chain is X antigen family member 3 (XAGE3), found in Homo sapiens (Human).